The following is a 139-amino-acid chain: Hydrogenase maturation factor HypA (139 aa).

Ni(2+) is bound at residue histidine 2. Zn(2+)-binding residues include cysteine 75, cysteine 78, cysteine 111, and cysteine 114.

Belongs to the HypA/HybF family.

Its function is as follows. Involved in the maturation of [NiFe] hydrogenases. Required for nickel insertion into the metal center of the hydrogenase. The polypeptide is Hydrogenase maturation factor HypA (Ignicoccus hospitalis (strain KIN4/I / DSM 18386 / JCM 14125)).